The sequence spans 89 residues: Exodeoxyribonuclease 7 small subunit (89 aa).

The protein belongs to the XseB family. As to quaternary structure, heterooligomer composed of large and small subunits.

It localises to the cytoplasm. It catalyses the reaction Exonucleolytic cleavage in either 5'- to 3'- or 3'- to 5'-direction to yield nucleoside 5'-phosphates.. Bidirectionally degrades single-stranded DNA into large acid-insoluble oligonucleotides, which are then degraded further into small acid-soluble oligonucleotides. The polypeptide is Exodeoxyribonuclease 7 small subunit (Chlorobium phaeobacteroides (strain DSM 266 / SMG 266 / 2430)).